The sequence spans 481 residues: Glycosyl hydrolase family 109 protein 1 (481 aa).

Positions 1–29 (MDNSSSRRRFLQTLGLATGALAAGSFANA) form a signal peptide, tat-type signal. NAD(+) contacts are provided by residues 84-85 (ER), D106, 155-158 (WEWH), 175-176 (EV), and N204. Substrate is bound by residues Y233, R252, 264–267 (YPTH), and Y347. Y264 contributes to the NAD(+) binding site.

The protein belongs to the Gfo/Idh/MocA family. Glycosyl hydrolase 109 subfamily. NAD(+) serves as cofactor. In terms of processing, predicted to be exported by the Tat system. The position of the signal peptide cleavage has not been experimentally proven.

Glycosidase. The polypeptide is Glycosyl hydrolase family 109 protein 1 (Akkermansia muciniphila (strain ATCC BAA-835 / DSM 22959 / JCM 33894 / BCRC 81048 / CCUG 64013 / CIP 107961 / Muc)).